Consider the following 2081-residue polypeptide: Non-reducing polyketide synthase terA (2081 aa).

Positions 85–190 are N-terminal acylcarrier protein transacylase (SAT) domain (SAT); it reads TLTLAFRIGV…ISLDIFAPFH (106 aa). In terms of domain architecture, Ketosynthase family 3 (KS3) spans 316-749; sequence AQKIAIVGMA…GGNTGLLLED (434 aa). Catalysis depends on for beta-ketoacyl synthase activity residues C488, H623, and H667. The segment at 849 to 1147 is malonyl-CoA:ACP transacylase (MAT) domain; sequence LFTGQGSHYT…LTLPSLRKQE (299 aa). The segment at 1230–1364 is N-terminal hotdog fold; that stretch reads QKVIKEDFGQ…CHVEYGDIKT (135 aa). The region spanning 1230-1539 is the PKS/mFAS DH domain; the sequence is QKVIKEDFGQ…FKAIPRAVIN (310 aa). The segment at 1259-1536 is product template (PT) domain; sequence VTGHLVNGSA…GVKFKAIPRA (278 aa). The active-site Proton acceptor; for dehydratase activity is the H1262. The tract at residues 1392–1539 is C-terminal hotdog fold; it reads YQKLDRKAAY…FKAIPRAVIN (148 aa). D1452 acts as the Proton donor; for dehydratase activity in catalysis. The disordered stretch occupies residues 1549-1578; sequence KALEKSAPRQNPKATATKTTQKPQAPVPVP. A compositionally biased stretch (low complexity) spans 1558–1572; sequence QNPKATATKTTQKPQ. Residues 1580 to 1658 form the Carrier 1 domain; sequence KQNKAIIDDF…QVKELILKLA (79 aa). S1617 bears the O-(pantetheine 4'-phosphoryl)serine mark. The disordered stretch occupies residues 1659-1700; the sequence is GSSSDENTTDTPDEEEDPATADADNTEMIRENPLESVSPNVS. Residues 1665–1677 are compositionally biased toward acidic residues; the sequence is NTTDTPDEEEDPA. Positions 1699–1776 constitute a Carrier 2 domain; it reads VSSSEAMDGF…QARLAIASLM (78 aa). S1736 is subject to O-(pantetheine 4'-phosphoryl)serine. Residues 1783 to 1809 form a disordered region; the sequence is GATTPYSGSDDAKSSTSSLTAGSVLTP. The tract at residues 1840-2070 is thioesterase (TE) domain; that stretch reads TLFLLPDGSG…TMMREPKVNQ (231 aa).

The catalysed reaction is 3 malonyl-CoA + acetyl-CoA + 2 H(+) = orsellinate + 3 CO2 + 4 CoA. The protein operates within secondary metabolite biosynthesis. Its function is as follows. Non-reducing polyketide synthase; part of the gene cluster that mediates the biosynthesis of terrein, a fungal metabolite with ecological, antimicrobial, antiproliferative, and antioxidative activities. The first step in the pathway is performed by the polyketide synthase terA that produces 4-hydroxy-6-methylpyranon (4-HMP), orsellinic acid (OA), and 2,3-dehydro-6-hydroxymellein (2,3-dehydro-6-HM) by condensing acetyl-CoA with two, three, or four malonyl-CoA units, respectively. 4-HMP and OA are not pathway intermediates, but are rather shunt or side products. 2,3-dehydro-6-HM is further converted to 6-hydroxymellein (6-HM) by the 6-hydroxymellein synthase terB. The monooxygenases terC and terD, the multicopper oxidase terE and the Kelch-like protein terF are then involved in the transformation of 6-HM to terrein. Even if they are co-regulated with the other terrein cluster genes, terH and terI seem to be dispensable for terrein production; whereas one or both of the 2 transporters terG and terJ are probably required for efficient secretion of metabolites. This is Non-reducing polyketide synthase terA from Aspergillus terreus (strain NIH 2624 / FGSC A1156).